Here is a 397-residue protein sequence, read N- to C-terminus: Riboflavin biosynthesis protein RibBA (397 aa).

Residues 1–199 are DHBP synthase; sequence MFHRIEEALE…IEDLIAYRRH (199 aa). D-ribulose 5-phosphate contacts are provided by residues 26–27, Asp31, 138–142, and Glu162; these read RE and RAGHT. Glu27 lines the Mg(2+) pocket. His141 serves as a coordination point for Mg(2+). A GTP cyclohydrolase II region spans residues 200–397; it reads HETLVTREVE…ASKLGHLLNL (198 aa). A GTP-binding site is contributed by 250–254; the sequence is RVHSE. 3 residues coordinate Zn(2+): Cys255, Cys266, and Cys268. Residues Gln271, 293–295, and Thr315 each bind GTP; that span reads EGR. The active-site Proton acceptor; for GTP cyclohydrolase activity is the Asp327. The active-site Nucleophile; for GTP cyclohydrolase activity is Arg329. Thr350 and Lys355 together coordinate GTP.

In the N-terminal section; belongs to the DHBP synthase family. It in the C-terminal section; belongs to the GTP cyclohydrolase II family. It depends on Mg(2+) as a cofactor. The cofactor is Mn(2+). Zn(2+) is required as a cofactor.

It catalyses the reaction D-ribulose 5-phosphate = (2S)-2-hydroxy-3-oxobutyl phosphate + formate + H(+). The catalysed reaction is GTP + 4 H2O = 2,5-diamino-6-hydroxy-4-(5-phosphoribosylamino)-pyrimidine + formate + 2 phosphate + 3 H(+). It functions in the pathway cofactor biosynthesis; riboflavin biosynthesis; 2-hydroxy-3-oxobutyl phosphate from D-ribulose 5-phosphate: step 1/1. The protein operates within cofactor biosynthesis; riboflavin biosynthesis; 5-amino-6-(D-ribitylamino)uracil from GTP: step 1/4. Catalyzes the conversion of D-ribulose 5-phosphate to formate and 3,4-dihydroxy-2-butanone 4-phosphate. Functionally, catalyzes the conversion of GTP to 2,5-diamino-6-ribosylamino-4(3H)-pyrimidinone 5'-phosphate (DARP), formate and pyrophosphate. This is Riboflavin biosynthesis protein RibBA from Bacillus mycoides (strain KBAB4) (Bacillus weihenstephanensis).